A 484-amino-acid chain; its full sequence is Trigger factor (484 aa).

A PPIase FKBP-type domain is found at 162–243 (GDFISIDLSA…VKSVKERELP (82 aa)). Positions 427-484 (DGNTIDTSEFFGKPPENDVTDLLDDDADGDAGVDADGDTENSAEPADADSADTAQGAG) are disordered. Residues 444 to 476 (DVTDLLDDDADGDAGVDADGDTENSAEPADADS) show a composition bias toward acidic residues.

The protein belongs to the FKBP-type PPIase family. Tig subfamily.

It localises to the cytoplasm. The catalysed reaction is [protein]-peptidylproline (omega=180) = [protein]-peptidylproline (omega=0). Its function is as follows. Involved in protein export. Acts as a chaperone by maintaining the newly synthesized protein in an open conformation. Functions as a peptidyl-prolyl cis-trans isomerase. This Mycobacterium ulcerans (strain Agy99) protein is Trigger factor.